The chain runs to 130 residues: Small ribosomal subunit protein uS8 (130 aa).

This sequence belongs to the universal ribosomal protein uS8 family. Part of the 30S ribosomal subunit. Contacts proteins S5 and S12.

Its function is as follows. One of the primary rRNA binding proteins, it binds directly to 16S rRNA central domain where it helps coordinate assembly of the platform of the 30S subunit. This is Small ribosomal subunit protein uS8 from Shewanella piezotolerans (strain WP3 / JCM 13877).